We begin with the raw amino-acid sequence, 397 residues long: Tryptophan synthase beta chain (397 aa).

Residue lysine 88 is modified to N6-(pyridoxal phosphate)lysine.

The protein belongs to the TrpB family. In terms of assembly, tetramer of two alpha and two beta chains. It depends on pyridoxal 5'-phosphate as a cofactor.

The catalysed reaction is (1S,2R)-1-C-(indol-3-yl)glycerol 3-phosphate + L-serine = D-glyceraldehyde 3-phosphate + L-tryptophan + H2O. The protein operates within amino-acid biosynthesis; L-tryptophan biosynthesis; L-tryptophan from chorismate: step 5/5. The beta subunit is responsible for the synthesis of L-tryptophan from indole and L-serine. In Shewanella amazonensis (strain ATCC BAA-1098 / SB2B), this protein is Tryptophan synthase beta chain.